The following is a 196-amino-acid chain: Cytochrome c biogenesis ATP-binding export protein CcmA (196 aa).

Residues Leu-2–Leu-195 enclose the ABC transporter domain. Residue Gly-34–Thr-41 participates in ATP binding.

This sequence belongs to the ABC transporter superfamily. CcmA exporter (TC 3.A.1.107) family. In terms of assembly, the complex is composed of two ATP-binding proteins (CcmA) and two transmembrane proteins (CcmB).

The protein resides in the cell inner membrane. The enzyme catalyses heme b(in) + ATP + H2O = heme b(out) + ADP + phosphate + H(+). Functionally, part of the ABC transporter complex CcmAB involved in the biogenesis of c-type cytochromes; once thought to export heme, this seems not to be the case, but its exact role is uncertain. Responsible for energy coupling to the transport system. This is Cytochrome c biogenesis ATP-binding export protein CcmA from Rickettsia bellii (strain RML369-C).